We begin with the raw amino-acid sequence, 625 residues long: tRNA uridine 5-carboxymethylaminomethyl modification enzyme MnmG (625 aa).

13–18 contributes to the FAD binding site; it reads GGGHAG. 273-287 contacts NAD(+); that stretch reads GPRYCPSIEDKVVRF.

This sequence belongs to the MnmG family. Homodimer. Heterotetramer of two MnmE and two MnmG subunits. The cofactor is FAD.

The protein resides in the cytoplasm. Functionally, NAD-binding protein involved in the addition of a carboxymethylaminomethyl (cmnm) group at the wobble position (U34) of certain tRNAs, forming tRNA-cmnm(5)s(2)U34. The polypeptide is tRNA uridine 5-carboxymethylaminomethyl modification enzyme MnmG (Methylococcus capsulatus (strain ATCC 33009 / NCIMB 11132 / Bath)).